Reading from the N-terminus, the 295-residue chain is Proline-rich protein 32 (295 aa).

2 disordered regions span residues 10-48 and 101-120; these read GHAP…GHPG and ATGE…SGQD.

This chain is Proline-rich protein 32 (PRR32), found in Bos taurus (Bovine).